Reading from the N-terminus, the 139-residue chain is Large-conductance mechanosensitive channel (139 aa).

2 helical membrane passes run 16–36 (VIDLAVGVIIGAAFNGIVKSL) and 79–99 (GAFVNTVIQFFIVATVVFLLV).

This sequence belongs to the MscL family. Homopentamer.

It is found in the cell inner membrane. Its function is as follows. Channel that opens in response to stretch forces in the membrane lipid bilayer. May participate in the regulation of osmotic pressure changes within the cell. The sequence is that of Large-conductance mechanosensitive channel from Caulobacter vibrioides (strain ATCC 19089 / CIP 103742 / CB 15) (Caulobacter crescentus).